Reading from the N-terminus, the 285-residue chain is Bifunctional protein FolD (285 aa).

Residues 166-168 (GAS) and Ile-232 each bind NADP(+).

This sequence belongs to the tetrahydrofolate dehydrogenase/cyclohydrolase family. In terms of assembly, homodimer.

The enzyme catalyses (6R)-5,10-methylene-5,6,7,8-tetrahydrofolate + NADP(+) = (6R)-5,10-methenyltetrahydrofolate + NADPH. It catalyses the reaction (6R)-5,10-methenyltetrahydrofolate + H2O = (6R)-10-formyltetrahydrofolate + H(+). Its pathway is one-carbon metabolism; tetrahydrofolate interconversion. Its function is as follows. Catalyzes the oxidation of 5,10-methylenetetrahydrofolate to 5,10-methenyltetrahydrofolate and then the hydrolysis of 5,10-methenyltetrahydrofolate to 10-formyltetrahydrofolate. This Baumannia cicadellinicola subsp. Homalodisca coagulata protein is Bifunctional protein FolD.